The primary structure comprises 266 residues: Phosphatidate cytidylyltransferase (266 aa).

8 consecutive transmembrane segments (helical) span residues 16-36 (VVLI…LFWA), 52-72 (LFQV…WVAA), 78-98 (PVEC…YQKA), 101-121 (SEAI…FGVY), 125-145 (GAVA…GAFF), 164-184 (LEGA…VGMG), 186-206 (LSGG…MAVF), and 237-257 (LDSM…LEIW).

The protein belongs to the CDS family.

It is found in the cell inner membrane. The catalysed reaction is a 1,2-diacyl-sn-glycero-3-phosphate + CTP + H(+) = a CDP-1,2-diacyl-sn-glycerol + diphosphate. It participates in phospholipid metabolism; CDP-diacylglycerol biosynthesis; CDP-diacylglycerol from sn-glycerol 3-phosphate: step 3/3. In Helicobacter pylori (strain J99 / ATCC 700824) (Campylobacter pylori J99), this protein is Phosphatidate cytidylyltransferase (cdsA).